The following is a 959-amino-acid chain: Protovillin (959 aa).

Residues 1–53 (MEPPLELPTQRKRVIPSKFGILKRNAEIEAEKNRENLQQSSCFSHINEIGKEI) are tail. A core region spans residues 54 to 832 (GLEIWKIIDD…PIMLPTSGVT (779 aa)). Gelsolin-like repeat units follow at residues 64-116 (STIQ…SQET), 204-244 (IRVK…LEKG), 309-366 (IKLY…DQRT), 479-529 (RNKF…EDKG), 603-647 (INIH…KEAA), and 713-754 (FKVF…TEKL). A run of 2 repeats spans residues 840 to 849 (TPKPITTPTV) and 851 to 860 (TPKPITTPTV). The interval 840 to 860 (TPKPITTPTVTTPKPITTPTV) is 2 X 10 AA repeats of T-P-K-P-I-T-T-P-T-V. The 65-residue stretch at 895 to 959 (TTITTFYPLS…KQLRVDNGLF (65 aa)) folds into the HP domain.

The protein belongs to the villin/gelsolin family.

It is found in the cytoplasm. Its subcellular location is the cytoskeleton. Its function is as follows. Caps actin filaments but displays neither severing nor cross-linking nor nucleating activities. Protovillin seems to be a villin precursor with only archaic capping activity. It lacks essential changes in the sequence to allow bundling of actin filaments and consequently the appearance of microvilli. The sequence is that of Protovillin (vilB) from Dictyostelium discoideum (Social amoeba).